Here is a 318-residue protein sequence, read N- to C-terminus: Ferrochelatase (318 aa).

Residues H186 and E264 each coordinate Fe cation.

It belongs to the ferrochelatase family.

Its subcellular location is the cytoplasm. It catalyses the reaction heme b + 2 H(+) = protoporphyrin IX + Fe(2+). It functions in the pathway porphyrin-containing compound metabolism; protoheme biosynthesis; protoheme from protoporphyrin-IX: step 1/1. Catalyzes the ferrous insertion into protoporphyrin IX. This is Ferrochelatase from Chlamydia caviae (strain ATCC VR-813 / DSM 19441 / 03DC25 / GPIC) (Chlamydophila caviae).